The following is a 415-amino-acid chain: Acetyl-CoA acetyltransferase 1 (415 aa).

Residue cysteine 99 is the Acyl-thioester intermediate of the active site. CoA is bound at residue lysine 239. Alanine 256 contributes to the K(+) binding site. Serine 260 serves as a coordination point for CoA. Valine 357 is a binding site for K(+). Residues histidine 361 and cysteine 391 each act as proton acceptor in the active site.

Belongs to the thiolase-like superfamily. Thiolase family. Expressed in the vascular system of roots, cotyledons, young leaves, fully expanded leaves, stems, flowers, and funiculi of siliques.

The protein resides in the cytoplasm. It is found in the peroxisome. The catalysed reaction is 2 acetyl-CoA = acetoacetyl-CoA + CoA. Its pathway is metabolic intermediate biosynthesis; (R)-mevalonate biosynthesis; (R)-mevalonate from acetyl-CoA: step 1/3. In terms of biological role, catalyzes the condensation of two molecules of acetyl-CoA to produce acetoacetyl-CoA. This is Acetyl-CoA acetyltransferase 1 from Arabidopsis thaliana (Mouse-ear cress).